Here is a 323-residue protein sequence, read N- to C-terminus: Putative HTH-type transcriptional regulatory protein Hlac_0273 (323 aa).

The HTH cro/C1-type domain occupies 132–189; the sequence is LADEREERGWSLGRLATELGVSRRTVSKYEDGMNASIEVAIQLEDLFNEPFSSPVDVL. A DNA-binding region (H-T-H motif) is located at residues 143 to 162; that stretch reads LGRLATELGVSRRTVSKYED. The interval 188–211 is disordered; the sequence is VLDGAGEVRDADPTPSAPETDPDD.

This chain is Putative HTH-type transcriptional regulatory protein Hlac_0273, found in Halorubrum lacusprofundi (strain ATCC 49239 / DSM 5036 / JCM 8891 / ACAM 34).